Reading from the N-terminus, the 309-residue chain is Tagatose-6-phosphate kinase (309 aa).

The protein belongs to the carbohydrate kinase PfkB family. LacC subfamily.

The enzyme catalyses D-tagatofuranose 6-phosphate + ATP = D-tagatofuranose 1,6-bisphosphate + ADP + H(+). The protein operates within carbohydrate metabolism; D-tagatose 6-phosphate degradation; D-glyceraldehyde 3-phosphate and glycerone phosphate from D-tagatose 6-phosphate: step 1/2. The chain is Tagatose-6-phosphate kinase from Streptococcus pyogenes serotype M2 (strain MGAS10270).